We begin with the raw amino-acid sequence, 142 residues long: Large ribosomal subunit protein uL13 (142 aa).

The protein belongs to the universal ribosomal protein uL13 family. Part of the 50S ribosomal subunit.

Its function is as follows. This protein is one of the early assembly proteins of the 50S ribosomal subunit, although it is not seen to bind rRNA by itself. It is important during the early stages of 50S assembly. The polypeptide is Large ribosomal subunit protein uL13 (Yersinia pseudotuberculosis serotype O:1b (strain IP 31758)).